Consider the following 265-residue polypeptide: 5'-nucleotidase SurE (265 aa).

A divalent metal cation-binding residues include D12, D13, S43, and N91.

The protein belongs to the SurE nucleotidase family. A divalent metal cation is required as a cofactor.

The protein localises to the cytoplasm. It carries out the reaction a ribonucleoside 5'-phosphate + H2O = a ribonucleoside + phosphate. Functionally, nucleotidase that shows phosphatase activity on nucleoside 5'-monophosphates. This Haloquadratum walsbyi (strain DSM 16790 / HBSQ001) protein is 5'-nucleotidase SurE.